Reading from the N-terminus, the 76-residue chain is U1-cyrtautoxin-As1d (76 aa).

4 disulfides stabilise this stretch: C23–C37, C30–C51, C36–C66, and C69–C76.

This sequence belongs to the neurotoxin 21 family. In terms of tissue distribution, expressed by the venom gland.

The protein resides in the secreted. Its function is as follows. Neurotoxin with probable ion channel impairing activity. In vivo, is both paralytic and lethal, when injected into lepidopteran larvae. The chain is U1-cyrtautoxin-As1d from Apomastus schlingeri (Trap-door spider).